Consider the following 479-residue polypeptide: Ribulose bisphosphate carboxylase large chain (479 aa).

A propeptide spanning residues 1–2 (MS) is cleaved from the precursor. Position 3 is an N-acetylproline (Pro-3). 2 residues coordinate substrate: Asn-123 and Thr-173. The active-site Proton acceptor is the Lys-175. Position 177 (Lys-177) interacts with substrate. The Mg(2+) site is built by Lys-201, Asp-203, and Glu-204. Position 201 is an N6-carboxylysine (Lys-201). The active-site Proton acceptor is the His-294. Arg-295, His-327, and Ser-379 together coordinate substrate.

This sequence belongs to the RuBisCO large chain family. Type I subfamily. In terms of assembly, heterohexadecamer of 8 large chains and 8 small chains; disulfide-linked. The disulfide link is formed within the large subunit homodimers. Requires Mg(2+) as cofactor. The disulfide bond which can form in the large chain dimeric partners within the hexadecamer appears to be associated with oxidative stress and protein turnover.

The protein resides in the plastid. Its subcellular location is the chloroplast. The enzyme catalyses 2 (2R)-3-phosphoglycerate + 2 H(+) = D-ribulose 1,5-bisphosphate + CO2 + H2O. It catalyses the reaction D-ribulose 1,5-bisphosphate + O2 = 2-phosphoglycolate + (2R)-3-phosphoglycerate + 2 H(+). Functionally, ruBisCO catalyzes two reactions: the carboxylation of D-ribulose 1,5-bisphosphate, the primary event in carbon dioxide fixation, as well as the oxidative fragmentation of the pentose substrate in the photorespiration process. Both reactions occur simultaneously and in competition at the same active site. The polypeptide is Ribulose bisphosphate carboxylase large chain (Hordeum vulgare (Barley)).